A 493-amino-acid polypeptide reads, in one-letter code: MLELPIISISIFLPLISVLYILLFISQSKKADKPIYVMYVAVLSSVLTFISTIYILIEFDSSNPAYQFVERYAWLDKIGLEFHVGVDGISILFVVLTSFLTLICIIGSLFTVKKYIKEYLVCFLLMESFCIGAFTSVNLLLFYLFFEAILVPMYIIIGVWGGKNRIYAALKFFLYTFFGSVFFLLSLIYIYSKMHSFDLTYIFQLTDNIPLFAQQILWWAIFIAFAVKIPIIPFHTWLPDAHVQAPTSGSVILAGILLKLGGYGFLRVLLPLCPSVSQEFAIYVIYLSVIAIIYASLVALAQKDMKKMIAYSSIAHMGYVTIGIFSFTKAGVSGAIFQMLSHGVISSCLFLIVGTLYERLHTKEIAKYGGVASKMPVLAAFFMIAMLGSVGLPGTSGFIGEFLSLLGIYKVNVVATFIAALGIIFGAVYMLKLYKEVMLGEITNKEIMHFRDLYKYEIISIAPLILLIIYFGLMPSSILNVFSLSVENLLVKF.

Helical transmembrane passes span 5-25 (PIIS…LLFI), 37-57 (VMYV…YILI), 89-109 (ISIL…IGSL), 115-135 (YIKE…GAFT), 139-159 (LLLF…IIGV), 172-192 (FFLY…YIYS), 216-236 (ILWW…PFHT), 251-271 (VILA…VLLP), 280-300 (FAIY…LVAL), 308-328 (MIAY…FSFT), 334-354 (GAIF…LIVG), 375-395 (MPVL…LPGT), 411-431 (VNVV…VYML), and 458-478 (IISI…PSSI).

Belongs to the complex I subunit 4 family.

Its subcellular location is the cell membrane. The catalysed reaction is a quinone + NADH + 5 H(+)(in) = a quinol + NAD(+) + 4 H(+)(out). NDH-1 shuttles electrons from NADH, via FMN and iron-sulfur (Fe-S) centers, to quinones in the respiratory chain. Couples the redox reaction to proton translocation (for every two electrons transferred, four hydrogen ions are translocated across the cytoplasmic membrane), and thus conserves the redox energy in a proton gradient. This Rickettsia conorii (strain ATCC VR-613 / Malish 7) protein is NADH-quinone oxidoreductase subunit M (nuoM).